A 145-amino-acid polypeptide reads, in one-letter code: Mitochondrial import receptor subunit TOM20 homolog (145 aa).

At 1 to 6 (MVGRNS) the chain is on the mitochondrial intermembrane side. The chain crosses the membrane as a helical span at residues 7 to 24 (AIAAGVCGALFIGYCIYF). The Cytoplasmic segment spans residues 25–145 (DRKRRSDPNF…AQSLAEDDVE (121 aa)). Glycyl lysine isopeptide (Lys-Gly) (interchain with G-Cter in ubiquitin) cross-links involve residues lysine 35, lysine 56, lysine 61, and lysine 68. Serine 135 and serine 138 each carry phosphoserine.

This sequence belongs to the Tom20 family. In terms of assembly, forms part of the preprotein translocase complex of the outer mitochondrial membrane (TOM complex) which consists of at least 7 different proteins (TOMM5, TOMM6, TOMM7, TOMM20, TOMM22, TOMM40 and TOMM70). Interacts with TOM22. Interacts with APEX1. Interacts with TBC1D21. Upon mitochondrial depolarization, interacts with PINK1; the interaction is required for PINK1-TOM-TIM23 supercomplex formation which is critical for PINK1 stabilization at the outer mitochondrial membrane, kinase activation and downstream mitophagy. Post-translationally, ubiquitinated by PRKN during mitophagy, leading to its degradation and enhancement of mitophagy. Deubiquitinated by USP30.

The protein localises to the mitochondrion outer membrane. Functionally, central component of the receptor complex responsible for the recognition and translocation of cytosolically synthesized mitochondrial preproteins. Together with TOM22 functions as the transit peptide receptor at the surface of the mitochondrion outer membrane and facilitates the movement of preproteins into the TOM40 translocation pore. Required for the translocation across the mitochondrial outer membrane of cytochrome P450 monooxygenases. This chain is Mitochondrial import receptor subunit TOM20 homolog (TOMM20), found in Bos taurus (Bovine).